The sequence spans 772 residues: Magnetosome formation protease MamE (772 aa).

At 1–21 (MTMFNGDVEDGGRSNVSCGKD) the chain is on the cytoplasmic side. Residues 22–42 (LKRYLMLMGVVALVVLFGAFI) traverse the membrane as a helical segment. The Lumenal segment spans residues 43 to 772 (YRQSSGGLRL…RNGQEFWIVL (730 aa)). Catalysis depends on charge relay system residues histidine 187, aspartate 220, and serine 296. Positions 374 to 397 (IAAGTPSPHVDGRQNMDCSNCHDI) match the MCR (magnetochrome) 1 motif. Heme contacts are provided by cysteine 391, cysteine 394, histidine 395, cysteine 437, cysteine 440, histidine 441, cysteine 488, cysteine 491, and histidine 492. 2 consecutive short sequence motifs (MCR) follow at residues 420 to 443 (IPAN…CHQF) and 470 to 494 (AIRA…CHQI). The 114-residue stretch at 445–558 (GGAAAGPIAF…ALTPLTQRLG (114 aa)) folds into the Cytochrome c domain. 2 consecutive PDZ domains span residues 522 to 626 (AINI…LRAG) and 696 to 765 (GATP…HRNG).

It in the N-terminal section; belongs to the peptidase S1C family. In terms of assembly, might interact with MamB via PDZ1. Heme serves as cofactor. The protein isolated from magnetosome membranes has a molecular weight of about 36.3 kDa, probably due to C-terminal cleavage. Subject to autocatalytic cleavage; cleavage also requires MamO; these may be the same event.

It is found in the magnetosome membrane. Acts at 2 distinct steps of magnetosome formation; required for correct localization of proteins to the magnetosome while the protease activity is required for maturation of small magnetite crystals into larger, functional ones. Probably cleaves at least itself, MamO and MamP; cleavage requires the putative transprot domain of MamO. Involved in localization of some proteins (at least MamA, MamC, MamF, MamI and MamJ) to the magnetosome. One of 7 genes (mamLQBIEMO) able to induce magnetosome membrane biogenesis; coexpression of mamLQRBIEMO in a deletion of the 17 gene mamAB operon restores magnetosome vesicle formation but not magnetite biosynthesis. This chain is Magnetosome formation protease MamE, found in Magnetospirillum gryphiswaldense (strain DSM 6361 / JCM 21280 / NBRC 15271 / MSR-1).